The following is a 114-amino-acid chain: Evasin-1 (114 aa).

The N-terminal stretch at 1-20 (MTFKACIAIITALCAMQVIC) is a signal peptide. Intrachain disulfides connect Cys-32/Cys-53, Cys-49/Cys-90, Cys-66/Cys-95, and Cys-85/Cys-104. 3 N-linked (GlcNAc...) asparagine glycosylation sites follow: Asn-39, Asn-54, and Asn-62.

The protein belongs to the evasin C8 family. In terms of assembly, monomer.

The protein localises to the secreted. Its function is as follows. Salivary chemokine-binding protein which shows chemokine neutralizing activity and binds to host chemokines CCL3, CCL4 and CCL18. Binds to CCL3 with 1:1 stoichiometry. The polypeptide is Evasin-1 (Rhipicephalus sanguineus (Brown dog tick)).